Reading from the N-terminus, the 426-residue chain is Fatty alcohol:caffeoyl-CoA acyltransferase (426 aa).

Active-site proton acceptor residues include His-162 and Asp-374.

This sequence belongs to the plant acyltransferase family. In terms of tissue distribution, expressed in the outermost circumference of mature roots, the endodermis of young roots and in the seed coat of developing seeds. Expressed in outer integument layer 1 of the seed coat.

In terms of biological role, involved in the synthesis of alkyl hydroxycinnamates in root waxes. Functions as a fatty alcohol:hydroxy cinnamoyl-CoA acyltransferase with apparent preference for caffeoyl-CoA. The sequence is that of Fatty alcohol:caffeoyl-CoA acyltransferase from Arabidopsis thaliana (Mouse-ear cress).